A 357-amino-acid polypeptide reads, in one-letter code: UDP-N-acetylglucosamine--N-acetylmuramyl-(pentapeptide) pyrophosphoryl-undecaprenol N-acetylglucosamine transferase (357 aa).

Residues 13 to 15 (SAG), arginine 166, serine 197, and glutamine 292 each bind UDP-N-acetyl-alpha-D-glucosamine.

This sequence belongs to the glycosyltransferase 28 family. MurG subfamily.

The protein localises to the cell membrane. The catalysed reaction is di-trans,octa-cis-undecaprenyl diphospho-N-acetyl-alpha-D-muramoyl-L-alanyl-D-glutamyl-meso-2,6-diaminopimeloyl-D-alanyl-D-alanine + UDP-N-acetyl-alpha-D-glucosamine = di-trans,octa-cis-undecaprenyl diphospho-[N-acetyl-alpha-D-glucosaminyl-(1-&gt;4)]-N-acetyl-alpha-D-muramoyl-L-alanyl-D-glutamyl-meso-2,6-diaminopimeloyl-D-alanyl-D-alanine + UDP + H(+). The protein operates within cell wall biogenesis; peptidoglycan biosynthesis. Functionally, cell wall formation. Catalyzes the transfer of a GlcNAc subunit on undecaprenyl-pyrophosphoryl-MurNAc-pentapeptide (lipid intermediate I) to form undecaprenyl-pyrophosphoryl-MurNAc-(pentapeptide)GlcNAc (lipid intermediate II). This Clostridium novyi (strain NT) protein is UDP-N-acetylglucosamine--N-acetylmuramyl-(pentapeptide) pyrophosphoryl-undecaprenol N-acetylglucosamine transferase.